The following is a 260-amino-acid chain: Proteasome subunit alpha (260 aa).

The interval 241–260 (VEEEEVKEKEEDYSELDSHY) is disordered.

The protein belongs to the peptidase T1A family. As to quaternary structure, the 20S proteasome core is composed of 14 alpha and 14 beta subunits that assemble into four stacked heptameric rings, resulting in a barrel-shaped structure. The two inner rings, each composed of seven catalytic beta subunits, are sandwiched by two outer rings, each composed of seven alpha subunits. The catalytic chamber with the active sites is on the inside of the barrel. Has a gated structure, the ends of the cylinder being occluded by the N-termini of the alpha-subunits. Is capped at one or both ends by the proteasome regulatory ATPase, PAN.

The protein localises to the cytoplasm. The formation of the proteasomal ATPase PAN-20S proteasome complex, via the docking of the C-termini of PAN into the intersubunit pockets in the alpha-rings, triggers opening of the gate for substrate entry. Interconversion between the open-gate and close-gate conformations leads to a dynamic regulation of the 20S proteasome proteolysis activity. Component of the proteasome core, a large protease complex with broad specificity involved in protein degradation. The protein is Proteasome subunit alpha of Pyrococcus horikoshii (strain ATCC 700860 / DSM 12428 / JCM 9974 / NBRC 100139 / OT-3).